The sequence spans 222 residues: MRVSQSLIPFAIIALVLSFVNAYDPSPLQDFCVAIDDLKGVFVNGRFCKDPERVDAKDFFFSGLNVPGNTNNQVGSNVTTVNVDQIPGLNTMGISLVRIDYAPHGQNPPHTHPRGSEILVLVEGTLYVGFVSSNQDNNRLFAKVLHPGDVFVFPIGMIHFQLNIGKIPAIAFAGLSSQNAGVITIANTVFGSNPPIYPELLARAFQLDANVVKELQAKFGSI.

A signal peptide spans 1–22 (MRVSQSLIPFAIIALVLSFVNA). C32 and C48 are oxidised to a cystine. In terms of domain architecture, Cupin type-1 spans 62–213 (SGLNVPGNTN…AFQLDANVVK (152 aa)). A glycan (N-linked (GlcNAc...) asparagine) is linked at N77. Positions 110, 112, 117, and 159 each coordinate Mn(2+).

Belongs to the germin family. In terms of assembly, oligomer (believed to be a pentamer but probably hexamer).

It localises to the secreted. The protein resides in the extracellular space. It is found in the apoplast. Its function is as follows. May play a role in plant defense. Probably has no oxalate oxidase activity even if the active site is conserved. The sequence is that of Germin-like protein subfamily 1 member 16 from Arabidopsis thaliana (Mouse-ear cress).